The chain runs to 327 residues: Elongation factor P--(R)-beta-lysine ligase (327 aa).

Residue 78-80 (SPE) coordinates substrate. ATP-binding positions include 102 to 104 (RNQ) and N111. Y120 serves as a coordination point for substrate. Position 246 to 247 (246 to 247 (EL)) interacts with ATP. Residue E253 coordinates substrate. G302 is an ATP binding site.

It belongs to the class-II aminoacyl-tRNA synthetase family. EpmA subfamily. As to quaternary structure, homodimer.

It catalyses the reaction D-beta-lysine + L-lysyl-[protein] + ATP = N(6)-((3R)-3,6-diaminohexanoyl)-L-lysyl-[protein] + AMP + diphosphate + H(+). Functionally, with EpmB is involved in the beta-lysylation step of the post-translational modification of translation elongation factor P (EF-P). Catalyzes the ATP-dependent activation of (R)-beta-lysine produced by EpmB, forming a lysyl-adenylate, from which the beta-lysyl moiety is then transferred to the epsilon-amino group of a conserved specific lysine residue in EF-P. The polypeptide is Elongation factor P--(R)-beta-lysine ligase (Baumannia cicadellinicola subsp. Homalodisca coagulata).